Consider the following 339-residue polypeptide: Heat stress transcription factor C-1a (339 aa).

The stretch at 154–217 forms a coiled coil; sequence EEEDAAEDVL…LAKLADDPNA (64 aa). The tract at residues 176 to 212 is hydrophobic repeat HR-A/B; sequence LRHEQTAIGEELARMSQRLQATERRPDQLMSFLAKLA. The segment at 227–248 is disordered; that stretch reads AERKRRRQHLPSHEPTVCPLPP. Positions 229–233 match the Nuclear localization signal motif; that stretch reads RKRRR.

It belongs to the HSF family. Class C subfamily. In terms of assembly, homotrimer. Post-translationally, exhibits temperature-dependent phosphorylation.

Its subcellular location is the nucleus. In terms of biological role, transcriptional regulator that specifically binds DNA of heat shock promoter elements (HSE). In Oryza sativa subsp. japonica (Rice), this protein is Heat stress transcription factor C-1a (HSFC1A).